We begin with the raw amino-acid sequence, 220 residues long: Antistasin (220 aa).

A signal peptide spans 1 to 19; it reads MNYLFVFLALSAAVTFANA. Antistasin-like domains follow at residues 21 to 46, 54 to 79, 91 to 117, 120 to 145, 154 to 180, and 183 to 208; these read CNKI…ICKC, CSNR…ICRC, CDGL…KCEC, CKQF…TCKC, CDDL…KCEC, and CKNF…TCKC.

This sequence belongs to the protease inhibitor I15 (antistasin) family. As to expression, gland cells. It is more strongly expressed in the head than in the gastric tissue.

Its subcellular location is the secreted. Functionally, this highly disulfide-bonded protein is a potent inhibitor of factor Xa. Facilitates digestion of tissues and may also protect the gastric tissues from its own digestive enzymes. May have therapeutic utility as an anticoagulant. Also exhibits a strong metastatic activity. This is Antistasin from Hydra vulgaris (Hydra).